Reading from the N-terminus, the 313-residue chain is Hsp90 co-chaperone Cdc37-like 1 (313 aa).

It belongs to the CDC37 family. As to quaternary structure, forms complexes with Hsp70 and Hsp90.

It is found in the cytoplasm. Functionally, co-chaperone that binds to numerous proteins and promotes their interaction with Hsp70 and Hsp90. This is Hsp90 co-chaperone Cdc37-like 1 (cdc37l1) from Danio rerio (Zebrafish).